Reading from the N-terminus, the 217-residue chain is Magnetosome protein MamA (217 aa).

TPR repeat units follow at residues 12-44, 46-79, 80-113, 114-147, 148-181, and 182-215; these read VTLY…NDDI, QVYY…DAFD, VEVA…APDN, IKVA…NPVN, FNVR…RPNE, and GKVH…DERS. Residues 41 to 112 form an N-terminal domain region; it reads NDDIRQVYYR…LERSIADAPD (72 aa). The interval 113–217 is C-terminal domain; it reads NIKVATVLGL…ANELDERSAV (105 aa).

This sequence belongs to the magnetosome MamA family. As to quaternary structure, forms round, 20 nm diameter complexes with a central cavity. Probably binds MamC. Interacts with full-length Mms6.

Its subcellular location is the magnetosome membrane. Its function is as follows. Probably forms a large homooligomer on which other magnetosome subunits assemble. Required for formation of functional magnetosomes from pre-existing vesicles. This Magnetospirillum gryphiswaldense (strain DSM 6361 / JCM 21280 / NBRC 15271 / MSR-1) protein is Magnetosome protein MamA.